Consider the following 165-residue polypeptide: UPF0303 protein BTH_I2506 (165 aa).

It belongs to the UPF0303 family.

This Burkholderia thailandensis (strain ATCC 700388 / DSM 13276 / CCUG 48851 / CIP 106301 / E264) protein is UPF0303 protein BTH_I2506.